A 271-amino-acid polypeptide reads, in one-letter code: Acetyl-coenzyme A carboxylase carboxyl transferase subunit beta (271 aa).

The CoA carboxyltransferase N-terminal domain occupies 21 to 271 (LWIQCPYCKQ…LGDLLALHTA (251 aa)). Positions 25, 28, 43, and 46 each coordinate Zn(2+). The C4-type zinc-finger motif lies at 25–46 (CPYCKQGSYRESLGNAQVCPHC).

This sequence belongs to the AccD/PCCB family. Acetyl-CoA carboxylase is a heterohexamer composed of biotin carboxyl carrier protein (AccB), biotin carboxylase (AccC) and two subunits each of ACCase subunit alpha (AccA) and ACCase subunit beta (AccD). Zn(2+) serves as cofactor.

It is found in the cytoplasm. It catalyses the reaction N(6)-carboxybiotinyl-L-lysyl-[protein] + acetyl-CoA = N(6)-biotinyl-L-lysyl-[protein] + malonyl-CoA. Its pathway is lipid metabolism; malonyl-CoA biosynthesis; malonyl-CoA from acetyl-CoA: step 1/1. Functionally, component of the acetyl coenzyme A carboxylase (ACC) complex. Biotin carboxylase (BC) catalyzes the carboxylation of biotin on its carrier protein (BCCP) and then the CO(2) group is transferred by the transcarboxylase to acetyl-CoA to form malonyl-CoA. This chain is Acetyl-coenzyme A carboxylase carboxyl transferase subunit beta, found in Lacticaseibacillus casei (strain BL23) (Lactobacillus casei).